The following is a 1543-amino-acid chain: ATP-binding cassette sub-family C member 2 (1543 aa).

Over 1–26 the chain is Extracellular; sequence MDEFCNSTFWNLSLLKSPEADLPLCF. Residues N6 and N11 are each glycosylated (N-linked (GlcNAc...) asparagine). Residues 27–47 traverse the membrane as a helical segment; it reads EQTVLVWIPLGFLWLLAPWQL. The Cytoplasmic segment spans residues 48–67; it reads YRIYRSRTKRFAITKFYLAK. The chain crosses the membrane as a helical span at residues 68–88; that stretch reads QVFVVCLLILAAIDLSLALTE. Over 89 to 92 the chain is Extracellular; that stretch reads DTGQ. The helical transmembrane segment at 93–113 threads the bilayer; sequence ATIPPVKYTNPILYLCTWLLV. The Cytoplasmic portion of the chain corresponds to 114 to 125; sequence LVIQHCRQCCIQ. The helical transmembrane segment at 126-146 threads the bilayer; it reads KNSWFLSMFWILSLLCGIFQF. At 147–164 the chain is on the extracellular side; it reads QTLIRALLQDSKSNMTYS. N160 carries an N-linked (GlcNAc...) asparagine glycan. A helical membrane pass occupies residues 165 to 185; sequence CLFFVSYGFQIVILILSAFSE. The Cytoplasmic segment spans residues 186–311; the sequence is SSDSTHAPSA…DFPKSWLVKA (126 aa). Positions 260–285 are disordered; sequence LKKSQQSPEGTSHGLTKKQSQSQDVL. A compositionally biased stretch (polar residues) spans 263–283; the sequence is SQQSPEGTSHGLTKKQSQSQD. 2 positions are modified to phosphoserine: S279 and S281. The helical transmembrane segment at 312-332 threads the bilayer; that stretch reads LFKTFYVVILKSFILKLAHDI. Residues 320 to 603 form the ABC transmembrane type-1 1 domain; that stretch reads ILKSFILKLA…LPMVISSVIQ (284 aa). The Extracellular segment spans residues 333 to 358; it reads LLFLNPQLLKFLIGFVKDPDSYPWVG. The helical transmembrane segment at 359 to 379 threads the bilayer; sequence YIYAILMFSVTLIQSFFLQCY. Residues 380-435 lie on the Cytoplasmic side of the membrane; sequence FQFCFVLGMTVRTTIIASVYKKALTLSNLARRQYTIGETVNLMSVDSQKLMDVTNY. A helical transmembrane segment spans residues 436–456; sequence IHLLWSSVLQIALSIFFLWRE. The Extracellular portion of the chain corresponds to 457-459; that stretch reads LGP. A helical membrane pass occupies residues 460-480; sequence SILAGVGLMVLLVPVNGVLAT. At 481–542 the chain is on the cytoplasmic side; sequence KIRKIQVQNM…NLLRFSQLQT (62 aa). A helical transmembrane segment spans residues 543-563; that stretch reads ILIFILHLTPTLVSVITFSVY. The Extracellular portion of the chain corresponds to 564-585; it reads VLVDSQNVLNAEKAFTSITLFN. Residues 586–606 traverse the membrane as a helical segment; sequence ILRFPLAMLPMVISSVIQASV. Topologically, residues 607–969 are cytoplasmic; that stretch reads SVDRLEQYLG…VKFSIYLKYL (363 aa). The ABC transporter 1 domain maps to 635 to 859; it reads VQFSEASFTW…KGVFAKNWKT (225 aa). 669-676 contacts ATP; that stretch reads GTVGSGKS. The residue at position 876 (S876) is a Phosphoserine. A disordered region spans residues 903-927; the sequence is RENSLRRTLSRSSRSGSRRGKSLKS. The span at 908–917 shows a compositional bias: low complexity; the sequence is RRTLSRSSRS. Residues S924 and S928 each carry the phosphoserine modification. Residues 970–990 traverse the membrane as a helical segment; the sequence is QAVGWWSLLFIVIFYVLNYVA. In terms of domain architecture, ABC transmembrane type-1 2 spans 977–1262; that stretch reads LLFIVIFYVL…LVRMTSEVET (286 aa). Residues 991 to 1031 are Extracellular-facing; that stretch reads FIGTNLWLSAWTSDSEKQNGTDNSPSQRDMRIGVFGALGIA. The N-linked (GlcNAc...) asparagine glycan is linked to N1009. Residues 1032–1052 traverse the membrane as a helical segment; that stretch reads QGIFLLSSSLWSIYACRNASK. Residues 1053–1095 lie on the Cytoplasmic side of the membrane; that stretch reads TLHRQLLTNILRAPMSFFDTTPTGRIVNRFAGDISTVDDTLPQ. The chain crosses the membrane as a helical span at residues 1096-1116; that stretch reads TLRSWLLCFFGIVSTLVMICM. A topological domain (extracellular) is located at residue A1117. A helical transmembrane segment spans residues 1118 to 1138; the sequence is TPIFIIIIIPLSILYVSVQVF. Residues 1139–1209 lie on the Cytoplasmic side of the membrane; that stretch reads YVATSRQLRR…TSNRWLAIRL (71 aa). Residues 1210–1230 form a helical membrane-spanning segment; it reads ELVGNLIVFCSALLLVIYKNS. Residues 1231–1232 are Extracellular-facing; sequence LT. Residues 1233–1253 traverse the membrane as a helical segment; that stretch reads GDTVGFVLSNALNITQTLNWL. At 1254 to 1543 the chain is on the cytoplasmic side; that stretch reads VRMTSEVETN…GIESVNHTEL (290 aa). One can recognise an ABC transporter 2 domain in the interval 1298–1532; sequence IQFNNYQVRY…MGPFYLMAKE (235 aa). Residue 1332 to 1339 coordinates ATP; that stretch reads GRTGAGKS. A Phosphoserine modification is found at S1436.

This sequence belongs to the ABC transporter superfamily. ABCC family. Conjugate transporter (TC 3.A.1.208) subfamily. As to expression, expressed in liver.

It is found in the apical cell membrane. It carries out the reaction an S-substituted glutathione(in) + ATP + H2O = an S-substituted glutathione(out) + ADP + phosphate + H(+). The enzyme catalyses taurolithocholate 3-sulfate(in) + ATP + H2O = taurolithocholate 3-sulfate(out) + ADP + phosphate + H(+). It catalyses the reaction ATP + H2O + xenobioticSide 1 = ADP + phosphate + xenobioticSide 2.. The catalysed reaction is leukotriene C4(in) + ATP + H2O = leukotriene C4(out) + ADP + phosphate + H(+). It carries out the reaction 17beta-estradiol 17-O-(beta-D-glucuronate)(in) + ATP + H2O = 17beta-estradiol 17-O-(beta-D-glucuronate)(out) + ADP + phosphate + H(+). The enzyme catalyses (4Z,15Z)-bilirubin IXalpha C8-beta-D-glucuronoside(in) + ATP + H2O = (4Z,15Z)-bilirubin IXalpha C8-beta-D-glucuronoside(out) + ADP + phosphate + H(+). It catalyses the reaction (4Z,15Z)-bilirubin IXalpha C8,C12-beta-D-bisglucuronoside(in) + ATP + H2O = (4Z,15Z)-bilirubin IXalpha C8,C12-beta-D-bisglucuronoside(out) + ADP + phosphate + H(+). ATP-dependent transporter of the ATP-binding cassette (ABC) family that binds and hydrolyzes ATP to enable active transport of various substrates including many drugs, toxicants and endogenous compound across cell membranes. Transports a wide variety of conjugated organic anions such as sulfate-, glucuronide- and glutathione (GSH)-conjugates of endo- and xenobiotics substrates. Mediates hepatobiliary excretion of mono- and bis-glucuronidated bilirubin molecules and therefore play an important role in bilirubin detoxification. Mediates also hepatobiliary excretion of others glucuronide conjugates such as 17beta-estradiol 17-glucosiduronic acid and leukotriene C4. Transports sulfated bile salt such as taurolithocholate sulfate. Transports various anticancer drugs, such as anthracycline, vinca alkaloid and methotrexate and HIV-drugs such as protease inhibitors. The sequence is that of ATP-binding cassette sub-family C member 2 from Mus musculus (Mouse).